Here is a 392-residue protein sequence, read N- to C-terminus: Phosphoglycerate kinase (392 aa).

Substrate contacts are provided by residues 21 to 23 (DFN), Arg-36, 59 to 62 (HLGR), Arg-118, and Arg-151. Residues Lys-201, Gly-292, Glu-323, and 349–352 (GGDS) contribute to the ATP site.

Belongs to the phosphoglycerate kinase family. As to quaternary structure, monomer.

It localises to the cytoplasm. The enzyme catalyses (2R)-3-phosphoglycerate + ATP = (2R)-3-phospho-glyceroyl phosphate + ADP. It participates in carbohydrate degradation; glycolysis; pyruvate from D-glyceraldehyde 3-phosphate: step 2/5. The protein is Phosphoglycerate kinase of Borrelia hermsii (strain HS1 / DAH).